The chain runs to 322 residues: Secretion system apparatus protein SsaQ (322 aa).

The protein belongs to the FliN/MopA/SpaO family.

Functionally, part of a type III secretion system. This chain is Secretion system apparatus protein SsaQ (ssaQ), found in Salmonella typhimurium (strain LT2 / SGSC1412 / ATCC 700720).